Reading from the N-terminus, the 295-residue chain is NAD kinase (295 aa).

The active-site Proton acceptor is D72. NAD(+)-binding positions include 72–73 (DG), 146–147 (ND), R157, K174, D176, 187–192 (TAYALS), and Q247.

It belongs to the NAD kinase family. Requires a divalent metal cation as cofactor.

The protein localises to the cytoplasm. It carries out the reaction NAD(+) + ATP = ADP + NADP(+) + H(+). Involved in the regulation of the intracellular balance of NAD and NADP, and is a key enzyme in the biosynthesis of NADP. Catalyzes specifically the phosphorylation on 2'-hydroxyl of the adenosine moiety of NAD to yield NADP. This Azotobacter vinelandii (strain DJ / ATCC BAA-1303) protein is NAD kinase.